Reading from the N-terminus, the 364-residue chain is Ribosomal RNA large subunit methyltransferase F (364 aa).

Positions 1-17 (MPKPAIKTAAKPATSSA) are enriched in low complexity. Positions 1–53 (MPKPAIKTAAKPATSSAGKRGKPNTPKSVAKPKTAKPKTASKPKVKPGEKKRL) are disordered. Residues 33–53 (KTAKPKTASKPKVKPGEKKRL) are compositionally biased toward basic residues.

The protein belongs to the methyltransferase superfamily. METTL16/RlmF family.

It localises to the cytoplasm. The enzyme catalyses adenosine(1618) in 23S rRNA + S-adenosyl-L-methionine = N(6)-methyladenosine(1618) in 23S rRNA + S-adenosyl-L-homocysteine + H(+). Functionally, specifically methylates the adenine in position 1618 of 23S rRNA. This Shewanella sp. (strain MR-7) protein is Ribosomal RNA large subunit methyltransferase F.